We begin with the raw amino-acid sequence, 229 residues long: Large ribosomal subunit protein uL1 (229 aa).

Belongs to the universal ribosomal protein uL1 family. As to quaternary structure, part of the 50S ribosomal subunit.

In terms of biological role, binds directly to 23S rRNA. The L1 stalk is quite mobile in the ribosome, and is involved in E site tRNA release. Functionally, protein L1 is also a translational repressor protein, it controls the translation of the L11 operon by binding to its mRNA. This is Large ribosomal subunit protein uL1 from Chlorobium phaeobacteroides (strain DSM 266 / SMG 266 / 2430).